Here is a 138-residue protein sequence, read N- to C-terminus: Small ribosomal subunit protein uS11c (138 aa).

It belongs to the universal ribosomal protein uS11 family. As to quaternary structure, part of the 30S ribosomal subunit.

It localises to the plastid. It is found in the chloroplast. The chain is Small ribosomal subunit protein uS11c from Phaseolus vulgaris (Kidney bean).